A 291-amino-acid polypeptide reads, in one-letter code: Transcription factor bHLH53 (291 aa).

One can recognise a bHLH domain in the interval 163 to 212 (PTLSSQSIAARGRRRRIAEKTHELGKLIPGGNKLNTAEMFQAAAKYVKFL).

In terms of assembly, homodimer. Expressed constitutively in roots, leaves, stems, and flowers.

The protein resides in the nucleus. The polypeptide is Transcription factor bHLH53 (BHLH53) (Arabidopsis thaliana (Mouse-ear cress)).